Here is a 715-residue protein sequence, read N- to C-terminus: Palmitoyltransferase ZDHHC5 (715 aa).

The Cytoplasmic segment spans residues 1–13 (MPAESGKRFKPSK). The helical transmembrane segment at 14–34 (YVPVSAAAIFLVGATTLFFAF) threads the bilayer. At 35–52 (TCPGLSLDVSPAVPIYNA) the chain is on the extracellular side. A helical membrane pass occupies residues 53–73 (IMFLFVLANFSMATFMDPGIF). Residues 74–148 (PRAEEDEDKE…NCIGRRNYRY (75 aa)) lie on the Cytoplasmic side of the membrane. Tyr-91 is subject to Phosphotyrosine. Positions 104–154 (KWCATCRFYRPPRCSHCSVCDNCVEEFDHHCPWVNNCIGRRNYRYFFLFLL) constitute a DHHC domain. Cys-134 functions as the S-palmitoyl cysteine intermediate in the catalytic mechanism. A helical transmembrane segment spans residues 149–169 (FFLFLLSLTAHIMGVFGFGLL). Topologically, residues 170–191 (YVLCHIEELSGVRTAVTMAVMC) are extracellular. Residues 192–212 (VAGLFFIPVAGLTGFHVVLVA) form a helical membrane-spanning segment. The Cytoplasmic segment spans residues 213-715 (RGRTTNEQVT…VGGTTYEISV (503 aa)). Phosphoserine is present on Ser-247. The interval 289-715 (GELRRTKSKG…VGGTTYEISV (427 aa)) is disordered. Thr-294 is subject to Phosphothreonine. A phosphoserine mark is found at Ser-296 and Ser-299. Thr-303 carries the post-translational modification Phosphothreonine. Ser-345 carries the phosphoserine modification. Thr-348 and Thr-350 each carry phosphothreonine. A compositionally biased stretch (low complexity) spans 359-373 (SSSSTSAAMPHSSSA). 4 positions are modified to phosphoserine: Ser-380, Ser-398, Ser-406, and Ser-409. Residue Thr-411 is modified to Phosphothreonine. Phosphoserine occurs at positions 415, 425, 429, and 432. The segment covering 422 to 432 (SSGSRSSSLKS) has biased composition (low complexity). The residue at position 436 (Thr-436) is a Phosphothreonine. The segment covering 442-478 (QLQSIRSEGTTSTSYKSLANQTRNGSLSYDSLLTPSD) has biased composition (polar residues). Phosphoserine occurs at positions 529 and 554. Residues 581–597 (PRTSSSSDDSKRSPLSK) show a composition bias toward low complexity. Residue Arg-617 is modified to Omega-N-methylarginine. A Phosphoserine modification is found at Ser-621. The residue at position 659 (Thr-659) is a Phosphothreonine. Positions 666–677 (LKTTYSKSNGQP) are enriched in polar residues. Residues Ser-684 and Ser-694 each carry the phosphoserine modification. Arg-697 carries the omega-N-methylarginine modification.

It belongs to the DHHC palmitoyltransferase family. ERF2/ZDHHC9 subfamily. Autopalmitoylated. Palmitoylation of the C-terminal tail regulates stimulation-dependent plasma membrane motility. Post-translationally, phosphorylation regulates association with endocytic proteins and its subcellular localization. Phosphorylation by LYN during fatty acid uptake leads to inactivation of the activity.

It is found in the cell membrane. The enzyme catalyses L-cysteinyl-[protein] + hexadecanoyl-CoA = S-hexadecanoyl-L-cysteinyl-[protein] + CoA. Palmitoyltransferase that catalyzes the addition of palmitate onto various protein substrates such as CTNND2, CD36, GSDMD, NLRP3, NOD1, NOD2, STAT3 and S1PR1 thus plays a role in various biological processes including cell adhesion, inflammation, fatty acid uptake, bacterial sensing or cardiac functions. Plays an important role in the regulation of synapse efficacy by mediating palmitoylation of delta-catenin/CTNND2, thereby increasing synaptic delivery and surface stabilization of alpha-amino-3-hydroxy-5-methyl-4-isoxazole propionic acid receptors (AMPARs). Under basal conditions, remains at the synaptic membrane through FYN-mediated phosphorylation that prevents association with endocytic proteins. Neuronal activity enhances the internalization and trafficking of DHHC5 from spines to dendritic shafts where it palmitoylates delta-catenin/CTNND2. Regulates cell adhesion at the plasma membrane by palmitoylating GOLGA7B and DSG2. Plays a role in innate immune response by mediating the palmitoylation of NOD1 and NOD2 and their proper recruitment to the bacterial entry site and phagosomes. Also participates in fatty acid uptake by palmitoylating CD36 and thereby targeting it to the plasma membrane. Upon binding of fatty acids to CD36, gets phosphorylated by LYN leading to inactivation and subsequent CD36 caveolar endocytosis. Controls oligodendrocyte development by catalyzing STAT3 palmitoylation. Acts as a regulator of inflammatory response by mediating palmitoylation of NLRP3 and GSDMD. Palmitoylates NLRP3 to promote inflammasome assembly and activation. Activates pyroptosis by catalyzing palmitoylation of gasdermin-D (GSDMD), thereby promoting membrane translocation and pore formation of GSDMD. This Rattus norvegicus (Rat) protein is Palmitoyltransferase ZDHHC5 (Zdhhc5).